Here is an 85-residue protein sequence, read N- to C-terminus: Putative defensin-like protein 258 (85 aa).

The signal sequence occupies residues 1 to 25; that stretch reads MINVSLKRSLLIFISVITSNIGSEA. Intrachain disulfides connect cysteine 57–cysteine 75, cysteine 63–cysteine 82, and cysteine 67–cysteine 84.

Belongs to the DEFL family.

The protein localises to the secreted. The polypeptide is Putative defensin-like protein 258 (Arabidopsis thaliana (Mouse-ear cress)).